Here is a 131-residue protein sequence, read N- to C-terminus: ATP synthase epsilon chain (131 aa).

This sequence belongs to the ATPase epsilon chain family. As to quaternary structure, F-type ATPases have 2 components, CF(1) - the catalytic core - and CF(0) - the membrane proton channel. CF(1) has five subunits: alpha(3), beta(3), gamma(1), delta(1), epsilon(1). CF(0) has three main subunits: a, b and c.

It is found in the cell inner membrane. Produces ATP from ADP in the presence of a proton gradient across the membrane. The sequence is that of ATP synthase epsilon chain from Helicobacter hepaticus (strain ATCC 51449 / 3B1).